The following is a 415-amino-acid chain: Corticotropin-releasing factor receptor 1 (415 aa).

Residues 1-23 (MGQRPQLRLVKALLLLGLNPVST) form the signal peptide. The Extracellular segment spans residues 24–111 (SLQDQQCESL…CQEILNEEKK (88 aa)). 3 disulfides stabilise this stretch: cysteine 30-cysteine 54, cysteine 44-cysteine 87, and cysteine 68-cysteine 102. N-linked (GlcNAc...) asparagine glycans are attached at residues asparagine 38, asparagine 45, asparagine 78, asparagine 90, and asparagine 98. Positions 99–108 (YSECQEILNE) are important for peptide agonist binding. Residues 112–142 (SKVHYHIAVIINYLGHCISLVALLVAFVLFL) traverse the membrane as a helical segment. Over 143–149 (RLRSIRC) the chain is Cytoplasmic. Residues 150-174 (LRNIIHWNLISAFILRNATWFVVQL) form a helical membrane-spanning segment. At 175-189 (TVSPEVHQSNVAWCR) the chain is on the extracellular side. Cysteine 188 and cysteine 258 are disulfide-bonded. The helical transmembrane segment at 190-218 (LVTAAYNYFHVTNFFWMFGEGCYLHTAIV) threads the bilayer. The Cytoplasmic segment spans residues 219–225 (LTYSTDR). A helical membrane pass occupies residues 226 to 253 (LRKWMFVCIGWGVPFPIIVAWAIGKLYY). The Extracellular portion of the chain corresponds to 254-269 (DNEKCWFGKRPGVYTD). Residues 270–295 (YIYQGPMILVLLINFIFLFNIVRILM) traverse the membrane as a helical segment. The important for antagonist binding stretch occupies residues 280 to 290 (LLINFIFLFNI). Over 296-306 (TKLRASTTSET) the chain is Cytoplasmic. Serine 301 carries the post-translational modification Phosphoserine; by PKA. A helical membrane pass occupies residues 307-331 (IQYRKAVKATLVLLPLLGITYMLFF). Residues 332–338 (VNPGEDE) lie on the Extracellular side of the membrane. Residues 339–368 (VSRVVFIYFNSFLESFQGFFVSVFYCFLNS) form a helical membrane-spanning segment. Residues 369–415 (EVRSAIRKRWRRWQDKHSIRARVARAMSIPTSPTRVSFHSIKQSTAV) lie on the Cytoplasmic side of the membrane.

It belongs to the G-protein coupled receptor 2 family. As to quaternary structure, heterodimer; heterodimerizes with GPER1. Interacts (via N-terminal extracellular domain) with CRH and UCN. Interacts with DLG1; this inhibits endocytosis of CRHR1 after agonist binding. C-terminal Ser or Thr residues may be phosphorylated. In terms of processing, phosphorylation at Ser-301 by PKA prevents maximal coupling to Gq-protein, and thereby negatively regulates downstream signaling. In terms of tissue distribution, detected in brain cortex (at protein level).

The protein resides in the cell membrane. It is found in the endosome. Its function is as follows. G-protein coupled receptor for CRH (corticotropin-releasing factor) and UCN (urocortin). Has high affinity for CRH and UCN. Ligand binding causes a conformation change that triggers signaling via guanine nucleotide-binding proteins (G proteins) and down-stream effectors, such as adenylate cyclase. Promotes the activation of adenylate cyclase, leading to increased intracellular cAMP levels. Inhibits the activity of the calcium channel CACNA1H. Required for normal embryonic development of the adrenal gland and for normal hormonal responses to stress. Plays a role in the response to anxiogenic stimuli. The polypeptide is Corticotropin-releasing factor receptor 1 (Crhr1) (Mus musculus (Mouse)).